The following is a 106-amino-acid chain: Small ribosomal subunit protein bS18 (106 aa).

The disordered stretch occupies residues 1-32 (MRWMKIMSEDMKQEQSGEGRGGRGGPARPLAS). Over residues 7–21 (MSEDMKQEQSGEGRG) the composition is skewed to basic and acidic residues.

It belongs to the bacterial ribosomal protein bS18 family. As to quaternary structure, part of the 30S ribosomal subunit. Forms a tight heterodimer with protein bS6.

Binds as a heterodimer with protein bS6 to the central domain of the 16S rRNA, where it helps stabilize the platform of the 30S subunit. In Magnetococcus marinus (strain ATCC BAA-1437 / JCM 17883 / MC-1), this protein is Small ribosomal subunit protein bS18.